Consider the following 99-residue polypeptide: NADH-quinone oxidoreductase subunit K (99 aa).

The next 3 helical transmembrane spans lie at 3–23 (PENYLYLSVLLFTIGAAGVLL), 28–48 (IVVFMCIELMLNAANLAFVTF), and 62–82 (FFTMVVAAAEVVVGLAIIMII).

It belongs to the complex I subunit 4L family. NDH-1 is composed of 14 different subunits. Subunits NuoA, H, J, K, L, M, N constitute the membrane sector of the complex.

The protein localises to the cell membrane. The catalysed reaction is a quinone + NADH + 5 H(+)(in) = a quinol + NAD(+) + 4 H(+)(out). Its function is as follows. NDH-1 shuttles electrons from NADH, via FMN and iron-sulfur (Fe-S) centers, to quinones in the respiratory chain. The immediate electron acceptor for the enzyme in this species is believed to be a menaquinone. Couples the redox reaction to proton translocation (for every two electrons transferred, four hydrogen ions are translocated across the cytoplasmic membrane), and thus conserves the redox energy in a proton gradient. This chain is NADH-quinone oxidoreductase subunit K, found in Rhodococcus erythropolis (strain PR4 / NBRC 100887).